The following is a 749-amino-acid chain: Probable serine/threonine-protein kinase drkC (749 aa).

Positions 1–31 are cleaved as a signal peptide; sequence MIIINKYIRMNKIAILFSFFILICCTGYSIS. The Extracellular portion of the chain corresponds to 32–423; the sequence is YKINGINENK…TSPNYQKIIY (392 aa). Positions 124–153 are disordered; the sequence is DRTDQVSTSSSSSSFSEENKKSSSDDSAPA. Low complexity predominate over residues 130–139; it reads STSSSSSSFS. N-linked (GlcNAc...) asparagine glycosylation is found at N157, N189, N283, N358, N373, N381, and N397. The helical transmembrane segment at 424–444 threads the bilayer; sequence IVVGVGIAVLLIIAVGIYFII. Over 445 to 749 the chain is Cytoplasmic; it reads RLRIKNKRLN…QEIVKRLEAM (305 aa). The Protein kinase domain occupies 491–749; sequence IVVQNRIGRG…QEIVKRLEAM (259 aa). ATP-binding positions include 497–505 and K518; that span reads IGRGSCAEV. The Proton acceptor role is filled by D615.

The protein belongs to the protein kinase superfamily. TKL Ser/Thr protein kinase family.

Its subcellular location is the membrane. It carries out the reaction L-seryl-[protein] + ATP = O-phospho-L-seryl-[protein] + ADP + H(+). The enzyme catalyses L-threonyl-[protein] + ATP = O-phospho-L-threonyl-[protein] + ADP + H(+). The polypeptide is Probable serine/threonine-protein kinase drkC (drkC) (Dictyostelium discoideum (Social amoeba)).